A 450-amino-acid chain; its full sequence is Phosphoglucosamine mutase (450 aa).

Ser101 serves as the catalytic Phosphoserine intermediate. Residues Ser101, Asp243, Asp245, and Asp247 each contribute to the Mg(2+) site. At Ser101 the chain carries Phosphoserine.

This sequence belongs to the phosphohexose mutase family. The cofactor is Mg(2+). In terms of processing, activated by phosphorylation.

It carries out the reaction alpha-D-glucosamine 1-phosphate = D-glucosamine 6-phosphate. In terms of biological role, catalyzes the conversion of glucosamine-6-phosphate to glucosamine-1-phosphate. The sequence is that of Phosphoglucosamine mutase from Desulfotalea psychrophila (strain LSv54 / DSM 12343).